We begin with the raw amino-acid sequence, 159 residues long: SsrA-binding protein (159 aa).

The segment at 137–159 (DKRETEKQRDWSREKGRLLKERG) is disordered.

It belongs to the SmpB family.

Its subcellular location is the cytoplasm. Its function is as follows. Required for rescue of stalled ribosomes mediated by trans-translation. Binds to transfer-messenger RNA (tmRNA), required for stable association of tmRNA with ribosomes. tmRNA and SmpB together mimic tRNA shape, replacing the anticodon stem-loop with SmpB. tmRNA is encoded by the ssrA gene; the 2 termini fold to resemble tRNA(Ala) and it encodes a 'tag peptide', a short internal open reading frame. During trans-translation Ala-aminoacylated tmRNA acts like a tRNA, entering the A-site of stalled ribosomes, displacing the stalled mRNA. The ribosome then switches to translate the ORF on the tmRNA; the nascent peptide is terminated with the 'tag peptide' encoded by the tmRNA and targeted for degradation. The ribosome is freed to recommence translation, which seems to be the essential function of trans-translation. In Mesorhizobium japonicum (strain LMG 29417 / CECT 9101 / MAFF 303099) (Mesorhizobium loti (strain MAFF 303099)), this protein is SsrA-binding protein.